A 402-amino-acid chain; its full sequence is Meiosis-specific cyclin rem1 (402 aa).

Belongs to the cyclin family. Cyclin AB subfamily.

Its function is as follows. Required for pre-meiotic DNA synthesis and S phase progression. Regulates levels of meiotic intragenic recombination. In Schizosaccharomyces pombe (strain 972 / ATCC 24843) (Fission yeast), this protein is Meiosis-specific cyclin rem1 (rem1).